The sequence spans 304 residues: Coenzyme PQQ synthesis protein B (304 aa).

Belongs to the PqqB family.

Its pathway is cofactor biosynthesis; pyrroloquinoline quinone biosynthesis. Functionally, may be involved in the transport of PQQ or its precursor to the periplasm. The chain is Coenzyme PQQ synthesis protein B from Pseudomonas aeruginosa (strain LESB58).